A 317-amino-acid chain; its full sequence is Beta-ketoacyl-[acyl-carrier-protein] synthase III (317 aa).

Active-site residues include Cys112 and His244. Positions 245 to 249 are ACP-binding; it reads QANLR. Asn274 is a catalytic residue.

Belongs to the thiolase-like superfamily. FabH family. In terms of assembly, homodimer.

The protein localises to the cytoplasm. The catalysed reaction is malonyl-[ACP] + acetyl-CoA + H(+) = 3-oxobutanoyl-[ACP] + CO2 + CoA. The protein operates within lipid metabolism; fatty acid biosynthesis. Functionally, catalyzes the condensation reaction of fatty acid synthesis by the addition to an acyl acceptor of two carbons from malonyl-ACP. Catalyzes the first condensation reaction which initiates fatty acid synthesis and may therefore play a role in governing the total rate of fatty acid production. Possesses both acetoacetyl-ACP synthase and acetyl transacylase activities. Its substrate specificity determines the biosynthesis of branched-chain and/or straight-chain of fatty acids. This Salmonella arizonae (strain ATCC BAA-731 / CDC346-86 / RSK2980) protein is Beta-ketoacyl-[acyl-carrier-protein] synthase III.